Consider the following 264-residue polypeptide: S-adenosylmethionine decarboxylase proenzyme (264 aa).

Residue Ser113 is the Schiff-base intermediate with substrate; via pyruvic acid of the active site. Pyruvic acid (Ser); by autocatalysis is present on Ser113. His118 (proton acceptor; for processing activity) is an active-site residue. Cys141 acts as the Proton donor; for catalytic activity in catalysis.

It belongs to the prokaryotic AdoMetDC family. Type 2 subfamily. In terms of assembly, heterooctamer of four alpha and four beta chains arranged as a tetramer of alpha/beta heterodimers. Requires pyruvate as cofactor. Post-translationally, is synthesized initially as an inactive proenzyme. Formation of the active enzyme involves a self-maturation process in which the active site pyruvoyl group is generated from an internal serine residue via an autocatalytic post-translational modification. Two non-identical subunits are generated from the proenzyme in this reaction, and the pyruvate is formed at the N-terminus of the alpha chain, which is derived from the carboxyl end of the proenzyme. The post-translation cleavage follows an unusual pathway, termed non-hydrolytic serinolysis, in which the side chain hydroxyl group of the serine supplies its oxygen atom to form the C-terminus of the beta chain, while the remainder of the serine residue undergoes an oxidative deamination to produce ammonia and the pyruvoyl group blocking the N-terminus of the alpha chain.

It catalyses the reaction S-adenosyl-L-methionine + H(+) = S-adenosyl 3-(methylsulfanyl)propylamine + CO2. It functions in the pathway amine and polyamine biosynthesis; S-adenosylmethioninamine biosynthesis; S-adenosylmethioninamine from S-adenosyl-L-methionine: step 1/1. Functionally, catalyzes the decarboxylation of S-adenosylmethionine to S-adenosylmethioninamine (dcAdoMet), the propylamine donor required for the synthesis of the polyamines spermine and spermidine from the diamine putrescine. In Xanthomonas campestris pv. campestris (strain B100), this protein is S-adenosylmethionine decarboxylase proenzyme.